Here is a 304-residue protein sequence, read N- to C-terminus: DDRGK domain-containing protein 1 (304 aa).

Residues 1-2 (MD) are Lumenal-facing. The chain crosses the membrane as a helical span at residues 3-23 (LIILVGIAIALLVVIISLYLL). The Cytoplasmic segment spans residues 24-304 (QKKNSTTEAK…LTPVSAEGSS (281 aa)). A disordered region spans residues 31–174 (EAKPAAAAPQ…AERLAKEERE (144 aa)). The segment covering 53-82 (RRAQIARNQRNRLRQNAPVAAAAPQAEAPA) has biased composition (low complexity). A compositionally biased stretch (basic and acidic residues) spans 105–174 (LDEKMGAKKR…AERLAKEERE (70 aa)).

It belongs to the DDRGK1 family. As to quaternary structure, interacts with Atg9; the interaction is transient.

The protein resides in the endoplasmic reticulum membrane. Its function is as follows. Substrate adapter for ufmylation, the covalent attachment of the ubiquitin-like modifier UFM1 to substrate proteins. Required for ufmylation of Atg9; protects the nervous system during aging, possibly by stabilizing Atg9 and supporting its function. This is DDRGK domain-containing protein 1 from Drosophila ananassae (Fruit fly).